Reading from the N-terminus, the 420-residue chain is Glutamyl-tRNA reductase (420 aa).

Substrate-binding positions include 49–52 (TCNR), Ser-107, 112–114 (EPQ), and Gln-118. The active-site Nucleophile is the Cys-50. 187 to 192 (GAGETI) is an NADP(+) binding site.

It belongs to the glutamyl-tRNA reductase family. In terms of assembly, homodimer.

It catalyses the reaction (S)-4-amino-5-oxopentanoate + tRNA(Glu) + NADP(+) = L-glutamyl-tRNA(Glu) + NADPH + H(+). It participates in porphyrin-containing compound metabolism; protoporphyrin-IX biosynthesis; 5-aminolevulinate from L-glutamyl-tRNA(Glu): step 1/2. Catalyzes the NADPH-dependent reduction of glutamyl-tRNA(Glu) to glutamate 1-semialdehyde (GSA). The chain is Glutamyl-tRNA reductase from Nitrosococcus oceani (strain ATCC 19707 / BCRC 17464 / JCM 30415 / NCIMB 11848 / C-107).